A 354-amino-acid polypeptide reads, in one-letter code: Protein RecA (354 aa).

An ATP-binding site is contributed by 67 to 74; it reads GPESSGKT.

The protein belongs to the RecA family.

Its subcellular location is the cytoplasm. Its function is as follows. Can catalyze the hydrolysis of ATP in the presence of single-stranded DNA, the ATP-dependent uptake of single-stranded DNA by duplex DNA, and the ATP-dependent hybridization of homologous single-stranded DNAs. It interacts with LexA causing its activation and leading to its autocatalytic cleavage. The sequence is that of Protein RecA from Serratia marcescens.